Reading from the N-terminus, the 202-residue chain is Glycerol-3-phosphate acyltransferase (202 aa).

4 helical membrane-spanning segments follow: residues 1–21, 84–104, 116–136, and 143–163; these read MTLI…FGVL, AVAA…FLHF, ILLG…LAVA, and SLAA…FLGF.

It belongs to the PlsY family. As to quaternary structure, probably interacts with PlsX.

The protein localises to the cell inner membrane. It catalyses the reaction an acyl phosphate + sn-glycerol 3-phosphate = a 1-acyl-sn-glycero-3-phosphate + phosphate. Its pathway is lipid metabolism; phospholipid metabolism. Its function is as follows. Catalyzes the transfer of an acyl group from acyl-phosphate (acyl-PO(4)) to glycerol-3-phosphate (G3P) to form lysophosphatidic acid (LPA). This enzyme utilizes acyl-phosphate as fatty acyl donor, but not acyl-CoA or acyl-ACP. The chain is Glycerol-3-phosphate acyltransferase from Nitrosospira multiformis (strain ATCC 25196 / NCIMB 11849 / C 71).